Consider the following 308-residue polypeptide: Vomeronasal type-1 receptor 92 (308 aa).

The Extracellular segment spans residues 1 to 18 (MNKDNTLHTIMKITMFSE). Residues 19 to 39 (VSVGISANSILFFAHLCMLLG) form a helical membrane-spanning segment. The Cytoplasmic portion of the chain corresponds to 40–48 (ENRPKPFHL). The helical transmembrane segment at 49 to 69 (YIVSLSLTQLILLITMGLIAV) threads the bilayer. Residues 70 to 91 (DMFMSWGRWDSTPCQSLIYLHR) lie on the Extracellular side of the membrane. Cysteines 83 and 170 form a disulfide. A helical transmembrane segment spans residues 92–112 (LLRGFTLCAACLLNVFWMITL). Topologically, residues 113–132 (SPRSSCLSKFKHNSPHHISG) are cytoplasmic. The helical transmembrane segment at 133 to 153 (AFLFLCVLYMSFSSHLLVSII) threads the bilayer. Residues 154-188 (ATPNLTSNIFMYVTQSCSLLPMSYSRTSTFSTTIA) lie on the Extracellular side of the membrane. A glycan (N-linked (GlcNAc...) asparagine) is linked at asparagine 157. The chain crosses the membrane as a helical span at residues 189 to 209 (IREAFLISLMALSSGFMVTLL). Residues 210–236 (WRHKKQAQHLHSTSLSSKASPERRATR) lie on the Cytoplasmic side of the membrane. Residues 237 to 257 (TILLLMSFFVVLYILENVVFY) form a helical membrane-spanning segment. Topologically, residues 258 to 267 (SRMKFKDGSM) are extracellular. A helical membrane pass occupies residues 268–288 (FYCVQIIVSHSYATISPFVFI). Residues 289-308 (CTEKHMTKILRSVCTRIINI) are Cytoplasmic-facing.

The protein belongs to the G-protein coupled receptor 1 family.

It is found in the cell membrane. In terms of biological role, putative pheromone receptor implicated in the regulation of social as well as reproductive behavior. This chain is Vomeronasal type-1 receptor 92 (Vom1r92), found in Rattus norvegicus (Rat).